The chain runs to 74 residues: Amphipathic peptide CT1 (74 aa).

An N-terminal signal peptide occupies residues 1–23; sequence MKTQIVILFISMIMLQMFVQIEG. Residue Val-37 is modified to Valine amide. A propeptide spanning residues 41-74 is cleaved from the precursor; it reads GLRNLDDLDDLDLDHLFDSDVSDADLRLLKQMFR.

This sequence belongs to the non-disulfide-bridged peptide (NDBP) superfamily. Short antimicrobial peptide (group 4) family. Expressed by the venom gland.

Its subcellular location is the secreted. It localises to the target cell membrane. Antimicrobial peptide that is rapidly bactericidal against Gram-positive bacteria (MIC=12.5 ug/ml against S.aureus, and MIC=100 ug/ml against M.luteus). Is also active against clinical antibiotics-resistant bacterial strains. This chain is Amphipathic peptide CT1, found in Scorpiops tibetanus (Scorpion).